The sequence spans 861 residues: Interleukin-12 receptor subunit beta-2 (861 aa).

An N-terminal signal peptide occupies residues 1-23; sequence MARTVCGCSWALIFIIMSLLVKA. The Extracellular segment spans residues 24-622; it reads KIDVCKRGDV…REFCLQGKAN (599 aa). N-linked (GlcNAc...) asparagine glycosylation is found at N48, N129, N166, and N271. 5 consecutive Fibronectin type-III domains span residues 126–224, 226–317, 318–415, 423–520, and 521–620; these read QPQN…VVRP, PPWD…TQTP, EKEP…NIAD, APQQ…KHKA, and PLSG…LQGK. Residues 305–309 carry the WSXWS motif motif; sequence WSDWS. N-linked (GlcNAc...) asparagine glycosylation is found at N347, N376, and N480. Residues 623–643 traverse the membrane as a helical segment; that stretch reads WSTFVAPSICIAVITVGVFSM. Topologically, residues 644–861 are cytoplasmic; the sequence is RCFRQKVFVL…LKMGCGSLML (218 aa). A Box 1 motif motif is present at residues 662–670; that stretch reads CSREIPDPA. The interval 718–761 is disordered; the sequence is FRRPHHPNWPGKGQRLQGRHASEEDTGSSASSPPPPRALTAETG. Y800 is modified (phosphotyrosine).

This sequence belongs to the type I cytokine receptor family. Type 2 subfamily. Heterodimer/heterooligomer; disulfide-linked. The functional high affinity IL12 receptor is composed of I12RB1 and IL12RB2. Il12RB2 binds JAK2 (via its N-terminal) through a membrane-proximal region of the cytoplasmic domain. In terms of processing, on IL12 stimulation, phosphorylated on C-terminal tyrosine residues.

Its subcellular location is the membrane. Functionally, receptor for interleukin-12. This subunit is the signaling component coupling to the JAK2/STAT4 pathway. This Sus scrofa (Pig) protein is Interleukin-12 receptor subunit beta-2 (IL12RB2).